A 458-amino-acid polypeptide reads, in one-letter code: Exodeoxyribonuclease 7 large subunit (458 aa).

The protein belongs to the XseA family. In terms of assembly, heterooligomer composed of large and small subunits.

The protein localises to the cytoplasm. The catalysed reaction is Exonucleolytic cleavage in either 5'- to 3'- or 3'- to 5'-direction to yield nucleoside 5'-phosphates.. Functionally, bidirectionally degrades single-stranded DNA into large acid-insoluble oligonucleotides, which are then degraded further into small acid-soluble oligonucleotides. The sequence is that of Exodeoxyribonuclease 7 large subunit from Escherichia coli O17:K52:H18 (strain UMN026 / ExPEC).